The chain runs to 71 residues: Translation initiation factor IF-1 (71 aa).

Residues Met1–Gly71 form the S1-like domain.

The protein belongs to the IF-1 family. Component of the 30S ribosomal translation pre-initiation complex which assembles on the 30S ribosome in the order IF-2 and IF-3, IF-1 and N-formylmethionyl-tRNA(fMet); mRNA recruitment can occur at any time during PIC assembly.

Its subcellular location is the cytoplasm. One of the essential components for the initiation of protein synthesis. Stabilizes the binding of IF-2 and IF-3 on the 30S subunit to which N-formylmethionyl-tRNA(fMet) subsequently binds. Helps modulate mRNA selection, yielding the 30S pre-initiation complex (PIC). Upon addition of the 50S ribosomal subunit IF-1, IF-2 and IF-3 are released leaving the mature 70S translation initiation complex. This chain is Translation initiation factor IF-1, found in Pelagibacter ubique (strain HTCC1062).